A 383-amino-acid chain; its full sequence is Erythronate-4-phosphate dehydrogenase (383 aa).

Substrate is bound by residues Ser45 and Thr66. NAD(+) is bound by residues Asp146, Thr174, 205-207 (ASR), and Asp231. Arg207 is an active-site residue. Residue Glu236 is part of the active site. His253 functions as the Proton donor in the catalytic mechanism. NAD(+) is bound at residue Gly256. Tyr257 is a substrate binding site.

The protein belongs to the D-isomer specific 2-hydroxyacid dehydrogenase family. PdxB subfamily. As to quaternary structure, homodimer.

The protein localises to the cytoplasm. It catalyses the reaction 4-phospho-D-erythronate + NAD(+) = (R)-3-hydroxy-2-oxo-4-phosphooxybutanoate + NADH + H(+). Its pathway is cofactor biosynthesis; pyridoxine 5'-phosphate biosynthesis; pyridoxine 5'-phosphate from D-erythrose 4-phosphate: step 2/5. In terms of biological role, catalyzes the oxidation of erythronate-4-phosphate to 3-hydroxy-2-oxo-4-phosphonooxybutanoate. The chain is Erythronate-4-phosphate dehydrogenase from Pseudomonas entomophila (strain L48).